The following is a 43-amino-acid chain: Protein PsbN (43 aa).

The helical transmembrane segment at 5–27 threads the bilayer; it reads TLIAISISGLIVSFTGYALYTAF.

This sequence belongs to the PsbN family.

The protein localises to the plastid. It is found in the chloroplast thylakoid membrane. Functionally, may play a role in photosystem I and II biogenesis. The chain is Protein PsbN from Cicer arietinum (Chickpea).